The primary structure comprises 180 residues: Symerythrin (180 aa).

A cross-link (3-(L-phenylalan-2'-yl)-L-valine (Phe-Val)) is located at residues 17-127 (FQDAVSHNNT…RRALETALEV (111 aa)). The region spanning 21-180 (VSHNNTDANA…RALENLLEVA (160 aa)) is the Ferritin-like diiron domain. Positions 37, 40, 71, 128, 131, 162, and 165 each coordinate Fe(3+).

In terms of assembly, monomer. The cofactor is Fe(3+).

It localises to the plastid. Its subcellular location is the cyanelle. Exhibits oxidase-like and peroxidase-like activities in vitro. The sequence is that of Symerythrin from Cyanophora paradoxa.